The primary structure comprises 717 residues: Delta-1-pyrroline-5-carboxylate synthase A (717 aa).

Positions 1–296 (MEELDRSRAF…WAPITDSNAR (296 aa)) are glutamate 5-kinase. Substrate contacts are provided by S60, D157, and N176. ATP is bound by residues 196 to 197 (SD) and 236 to 242 (RGGMTAK). Residues 297 to 717 (DMAVAARESS…YTHQDIPIQA (421 aa)) are gamma-glutamyl phosphate reductase.

It in the N-terminal section; belongs to the glutamate 5-kinase family. The protein in the C-terminal section; belongs to the gamma-glutamyl phosphate reductase family.

It catalyses the reaction L-glutamate + ATP = L-glutamyl 5-phosphate + ADP. The catalysed reaction is L-glutamate 5-semialdehyde + phosphate + NADP(+) = L-glutamyl 5-phosphate + NADPH + H(+). The protein operates within amino-acid biosynthesis; L-proline biosynthesis; L-glutamate 5-semialdehyde from L-glutamate: step 1/2. It participates in amino-acid biosynthesis; L-proline biosynthesis; L-glutamate 5-semialdehyde from L-glutamate: step 2/2. P5CS plays a key role in proline biosynthesis, leading to osmoregulation in plants. This is Delta-1-pyrroline-5-carboxylate synthase A (P5CSA) from Arabidopsis thaliana (Mouse-ear cress).